Consider the following 184-residue polypeptide: Large ribosomal subunit protein uL5c (184 aa).

This sequence belongs to the universal ribosomal protein uL5 family. Part of the 50S ribosomal subunit; contacts the 5S rRNA.

Its subcellular location is the plastid. It is found in the chloroplast. Functionally, binds 5S rRNA, forms part of the central protuberance of the 50S subunit. The chain is Large ribosomal subunit protein uL5c (rpl5) from Mesostigma viride (Green alga).